The sequence spans 693 residues: Heat shock protein homolog SSE1 (693 aa).

The interval 665-693 is disordered; the sequence is LAEKLAAQRKAESEKKESKADAEGDVELD. The segment covering 673 to 686 has biased composition (basic and acidic residues); it reads RKAESEKKESKADA.

It belongs to the heat shock protein 70 family.

The protein localises to the cytoplasm. The sequence is that of Heat shock protein homolog SSE1 (SSE1) from Lachancea kluyveri (strain ATCC 58438 / CBS 3082 / BCRC 21498 / NBRC 1685 / JCM 7257 / NCYC 543 / NRRL Y-12651) (Yeast).